The sequence spans 916 residues: Phosphoenolpyruvate carboxylase (916 aa).

Catalysis depends on residues His-144 and Lys-578.

Belongs to the PEPCase type 1 family. Mg(2+) serves as cofactor.

It catalyses the reaction oxaloacetate + phosphate = phosphoenolpyruvate + hydrogencarbonate. Its function is as follows. Forms oxaloacetate, a four-carbon dicarboxylic acid source for the tricarboxylic acid cycle. The polypeptide is Phosphoenolpyruvate carboxylase (Aromatoleum aromaticum (strain DSM 19018 / LMG 30748 / EbN1) (Azoarcus sp. (strain EbN1))).